Consider the following 156-residue polypeptide: Hydrogenase 3 maturation protease (156 aa).

Positions 16, 62, and 90 each coordinate Ni(2+).

Belongs to the peptidase A31 family. In terms of assembly, monomer.

It catalyses the reaction This enzyme specifically removes a 32-amino acid peptide from the C-terminus of the precursor of the large subunit of E.coli hydrogenase 3 by cleavage at the C-terminal side of Arg-537.. In terms of biological role, protease involved in the C-terminal processing of HycE, the large subunit of hydrogenase 3. The protein is Hydrogenase 3 maturation protease (hycI) of Escherichia coli O157:H7.